The following is a 549-amino-acid chain: Neutral amino acid transporter 9 (549 aa).

A disordered region spans residues 1 to 27; that stretch reads MDEDSKPLLGSVPTGDYYTDSLDPKQR. Over 1 to 107 the chain is Cytoplasmic; the sequence is MDEDSKPLLG…GGDSPIKNPS (107 aa). A helical membrane pass occupies residues 108–128; it reads IVTIFAIWNTMMGTSILSIPW. The tract at residues 117–122 is important for arginine binding and amino acid transport; sequence TMMGTS. Residue serine 122 coordinates arginine. Over 129 to 134 the chain is Lumenal; it reads GIKQAG. The chain crosses the membrane as a helical span at residues 135 to 155; the sequence is FTLGIIIIVLMGLLTLYCCYR. At 156 to 186 the chain is on the cytoplasmic side; the sequence is VLKSTKSIPYVDTSDWEFPDVCKYYFGGFGK. Residues 187–213 traverse the membrane as a helical segment; sequence WSSLVFSLVSLIGAMVVYWVLMSNFLF. At 214–271 the chain is on the lumenal side; sequence NTGKFIFNYVHNVNTSDAFGTNGTERVICPYPDVDPHGNSSTSLYSGSDNSTGLEFDH. N-linked (GlcNAc...) asparagine glycans are attached at residues asparagine 227, asparagine 235, asparagine 252, and asparagine 263. The cysteines at positions 242 and 412 are disulfide-linked. The chain crosses the membrane as a helical span at residues 272–288; the sequence is WWSKTNTIPFYLILLLL. Residues 289–297 lie on the Cytoplasmic side of the membrane; that stretch reads PLLNFRSAS. A helical transmembrane segment spans residues 298–322; sequence FFARFTFLGTISVIYLIFLVTYKAI. Over 323-344 the chain is Lumenal; sequence QLGFHLEFHWFDSSMFFVPEFR. Residues 345 to 365 form a helical membrane-spanning segment; that stretch reads TLFPQLSGVLTLAFFIHNCII. The Cytoplasmic segment spans residues 366 to 382; sequence TLMKNNKHQENNVRDLS. The helical transmembrane segment at 383–403 threads the bilayer; sequence LAYLLVGLTYLYVGVLIFAAF. The Lumenal segment spans residues 404–425; the sequence is PSPPLSKECIEPNFLDNFPSSD. Residues 426–446 traverse the membrane as a helical segment; it reads ILVFVARTFLLFQMTTVYPLL. The CARC motif motif lies at 432-442; the sequence is RTFLLFQMTTV. The CRAC motif signature appears at 445–451; it reads LLGYLVR. The Cytoplasmic segment spans residues 447–467; that stretch reads GYLVRVQLMGQIFGNHYPGFL. A helical membrane pass occupies residues 468–488; that stretch reads HVFVLNVFVVGAGVLMARFYP. Residues 489–495 are Lumenal-facing; the sequence is NIGSIIR. Residues 496–516 traverse the membrane as a helical segment; the sequence is YSGALCGLALVFVLPSLIHMV. The Cytoplasmic segment spans residues 517 to 528; sequence SLKRRGELRWTS. The chain crosses the membrane as a helical span at residues 529-549; it reads TLFHGFLILLGVANLLGQFFM.

This sequence belongs to the amino acid/polyamine transporter 2 family. SLC38A9 subfamily. As to quaternary structure, associated component of the Ragulator complex. Associated component of the Rag GTPases heterodimers (RRAGA and RRAGC). Post-translationally, glycosylated.

It is found in the lysosome membrane. The protein resides in the late endosome membrane. It catalyses the reaction L-leucine(in) = L-leucine(out). The enzyme catalyses L-tyrosine(in) = L-tyrosine(out). The catalysed reaction is L-glutamine(out) = L-glutamine(in). It carries out the reaction L-asparagine(out) = L-asparagine(in). Amino acid transport activity is increased by sodium. Transport of L-glutamine, leucine and tyrosine is increased by arginine binding. Its function is as follows. Lysosomal amino acid transporter involved in the activation of mTORC1 in response to amino acid levels. Probably acts as an amino acid sensor of the Rag GTPases and Ragulator complexes, 2 complexes involved in amino acid sensing and activation of mTORC1, a signaling complex promoting cell growth in response to growth factors, energy levels, and amino acids. Following activation by amino acids, the Ragulator and Rag GTPases function as a scaffold recruiting mTORC1 to lysosomes where it is in turn activated. SLC38A9 mediates transport of amino acids with low capacity and specificity with a slight preference for polar amino acids. Acts as an arginine sensor. Following activation by arginine binding, mediates transport of L-glutamine, leucine and tyrosine with high efficiency, and is required for the efficient utilization of these amino acids after lysosomal protein degradation. However, the transport mechanism is not well defined and the role of sodium is not clear. Guanine exchange factor (GEF) that, upon arginine binding, stimulates GDP release from RRAGA and therefore activates the Rag GTPase heterodimer and the mTORC1 pathway in response to nutrient sufficiency. The protein is Neutral amino acid transporter 9 of Danio rerio (Zebrafish).